A 293-amino-acid polypeptide reads, in one-letter code: Hydroxyquinol 1,2-dioxygenase (293 aa).

The Fe cation site is built by tyrosine 164, tyrosine 197, histidine 221, and histidine 223.

Belongs to the intradiol ring-cleavage dioxygenase family. Homodimer. Fe(3+) is required as a cofactor.

It catalyses the reaction benzene-1,2,4-triol + O2 = maleylacetate + 2 H(+). It participates in aromatic compound metabolism; beta-ketoadipate pathway; 3-oxoadipate from 3,4-dihydroxybenzoate: step 2/4. With respect to regulation, inhibited by 3,5-dichlorocatechol, chlorohydroquinone and 4,5-dibromocatechol. Catalyzes the ortho-cleavage of the aromatic ring of hydroxyquinol. This is Hydroxyquinol 1,2-dioxygenase (chqB) from Nocardioides simplex (Arthrobacter simplex).